Here is a 404-residue protein sequence, read N- to C-terminus: Alanine racemase (404 aa).

Residue K34 is the Proton acceptor; specific for D-alanine of the active site. K34 is modified (N6-(pyridoxal phosphate)lysine). R133 provides a ligand contact to substrate. The region spanning 226–273 (EVSSNLSYTEEFESNTAALTTTACINKCPDVSVRLTPKLPLKGSYTVR) is the RPE1 insert domain. Residue Y298 is the Proton acceptor; specific for L-alanine of the active site. A substrate-binding site is contributed by M346.

It belongs to the alanine racemase family. Requires pyridoxal 5'-phosphate as cofactor.

The catalysed reaction is L-alanine = D-alanine. Its pathway is amino-acid biosynthesis; D-alanine biosynthesis; D-alanine from L-alanine: step 1/1. Functionally, catalyzes the interconversion of L-alanine and D-alanine. May also act on other amino acids. The protein is Alanine racemase (alr) of Rickettsia prowazekii (strain Madrid E).